Consider the following 817-residue polypeptide: Protein-glutamine gamma-glutamyltransferase K (817 aa).

Disordered regions lie at residues 1–38 (MMDG…SRRG) and 59–105 (DDWG…DGTI). The interval 1-100 (MMDGPRSDVG…VSRGSGVNAA (100 aa)) is membrane anchorage region. Residues 17–26 (LQPPTTPSPE) are compositionally biased toward pro residues. Residue Thr-22 is modified to Phosphothreonine. 6 positions are modified to phosphoserine: Ser-24, Ser-68, Ser-82, Ser-85, Ser-92, and Ser-95. A compositionally biased stretch (low complexity) spans 71–84 (RGSSSGTRRPGSRG). Active-site residues include Cys-377, His-436, and Asp-459. Residues Asn-499, Asp-501, Glu-548, and Glu-553 each contribute to the Ca(2+) site. Residues 793-817 (GGFFSDAGGDSHLGETIPMASRGGA) are disordered.

Belongs to the transglutaminase superfamily. Transglutaminase family. As to quaternary structure, interacts with PLAAT4. Ca(2+) serves as cofactor. Palmitoylated. In terms of processing, the membrane anchorage region possesses a cluster of five cysteines within which fatty acid(s) may become thioester-linked. It is subject to phorbol ester-stimulated phosphorylation and is hypersensitive to proteolysis, which releases the enzyme in a soluble form. Post-translationally, tyrosine-phosphorylated.

The protein localises to the membrane. It carries out the reaction L-glutaminyl-[protein] + L-lysyl-[protein] = [protein]-L-lysyl-N(6)-5-L-glutamyl-[protein] + NH4(+). Catalyzes the cross-linking of proteins and the conjugation of polyamines to proteins. Responsible for cross-linking epidermal proteins during formation of the stratum corneum. Involved in cell proliferation. The polypeptide is Protein-glutamine gamma-glutamyltransferase K (TGM1) (Homo sapiens (Human)).